The chain runs to 201 residues: MALHDENVVWHPHPVTVTAREQLHGHRGVVLWFTGLSGSGKSTVAGALEEALHHRSVSTYLLDGDNVRHGLCRNLGFSDADRKENIRRVGEVASLMADAGLIVLTAFISPHRAERQLVQERVGHDRFIEIYVDTPLAVCEQRDPKGLYKKARAGELRNFTGIDGIYEAPESPQIHLNGEQLVTNLVSQLLDLLRRRDIISS.

Residue 35 to 42 (GLSGSGKS) coordinates ATP. S109 serves as the catalytic Phosphoserine intermediate.

It belongs to the APS kinase family.

It carries out the reaction adenosine 5'-phosphosulfate + ATP = 3'-phosphoadenylyl sulfate + ADP + H(+). Its pathway is sulfur metabolism; hydrogen sulfide biosynthesis; sulfite from sulfate: step 2/3. Catalyzes the synthesis of activated sulfate. The sequence is that of Adenylyl-sulfate kinase from Salmonella arizonae (strain ATCC BAA-731 / CDC346-86 / RSK2980).